Reading from the N-terminus, the 382-residue chain is Pyrimidine monooxygenase RutA (382 aa).

FMN is bound by residues 68–69 (IK), N134, E143, 159–160 (RY), and S209.

Belongs to the NtaA/SnaA/DszA monooxygenase family. RutA subfamily.

It carries out the reaction uracil + FMNH2 + NADH + O2 = (Z)-3-ureidoacrylate + FMN + NAD(+) + H2O + H(+). The catalysed reaction is thymine + FMNH2 + NADH + O2 = (Z)-2-methylureidoacrylate + FMN + NAD(+) + H2O + H(+). In terms of biological role, catalyzes the pyrimidine ring opening between N-3 and C-4 by an unusual flavin hydroperoxide-catalyzed mechanism, adding oxygen atoms in the process to yield ureidoacrylate peracid, that immediately reacts with FMN forming ureidoacrylate and FMN-N(5)-oxide. The FMN-N(5)-oxide reacts spontaneously with NADH to produce FMN. Requires the flavin reductase RutF to regenerate FMN in vivo. This chain is Pyrimidine monooxygenase RutA, found in Escherichia coli O8 (strain IAI1).